Reading from the N-terminus, the 1700-residue chain is Rho guanine nucleotide exchange factor 28 (1700 aa).

The interval 288–343 (TEKATMPSGAAETEEEVRNLESGRSPSEEEEDAKSIKSQVDGPSEHEDQDRLPLDR) is disordered. Phosphoserine is present on residues S312 and S314. The segment covering 330–343 (PSEHEDQDRLPLDR) has biased composition (basic and acidic residues). Residue S478 is modified to Phosphoserine. The interval 483 to 532 (VADSEGEGGSEPPICYAVGSQSSPRTGLPSGDELDSFETNTEPDCNISRT) is disordered. The residue at position 623 (S623) is a Phosphoserine. The Phorbol-ester/DAG-type zinc-finger motif lies at 651–698 (RHQFVPGTFSGVLQCSGCDKTLLGKESLQCANCKANTHKGCKDAVPPC). In terms of domain architecture, DH spans 846 to 1041 (KRQDVIFELM…KDMIAAVDLK (196 aa)). The 90-residue stretch at 1095–1184 (ATGRFKDILA…NWMRRIQQAV (90 aa)) folds into the PH domain. 2 disordered regions span residues 1184-1205 (VESC…RRKA) and 1289-1328 (KMGD…TEGT). Positions 1191–1205 (EGGRTSESDEERRKA) are enriched in basic and acidic residues. Residues 1292–1301 (DVSQSSEESP) form an interaction with PTK2/FAK1; required for regulation of axonal branching and synapse formation region. A compositionally biased stretch (polar residues) spans 1309 to 1325 (TPSTQDVPASPTASLVT). The segment at 1369-1380 (IIQAIQNLTRLL) is mediates cytoplasmic retention and interaction with YWHAH. Residues 1421-1522 (QEKSRYLEKQ…RERQKMRVQQ (102 aa)) adopt a coiled-coil conformation. The interval 1421 to 1700 (QEKSRYLEKQ…DGAEENILYL (280 aa)) is interaction with microtubules. Positions 1493–1524 (QLQEYQQSLERLREGQRMVERERQKMRVQQGL) are RNA-binding. A Phosphoserine modification is found at S1535. The segment at 1563–1576 (FINEAFGHMSLNTS) is mediates cytoplasmic retention and interaction with MAPK8IP1. The interval 1602 to 1700 (SESPTELKID…DGAEENILYL (99 aa)) is disordered. S1604 is subject to Phosphoserine. Low complexity predominate over residues 1647-1663 (DLDSFQSESSSPQDSNQ). Over residues 1664–1675 (RGPQPQTLTTEA) the composition is skewed to polar residues.

Homooligomer; forms some cytoplasmic aggregates. Forms a complex with MAPK8 and MAPK8IP1. Interacts with RHOA. Interacts with microtubules. Interacts with YWHAE and YWHAH. Interacts with PTK2/FAK1. Interacts with NEFL. Interacts with CTNND2; prevents interaction with RHOA. Post-translationally, phosphorylated on tyrosine upon stimulation of cells by laminin. Highly enriched in the brain (at protein level). Also detected in lung and kidney.

It is found in the cytoplasm. Its subcellular location is the cell membrane. Functionally, functions as a RHOA-specific guanine nucleotide exchange factor regulating signaling pathways downstream of integrins and growth factor receptors. Functions in axonal branching, synapse formation and dendritic morphogenesis. Also functions in focal adhesion formation, cell motility and B-lymphocytes activation. May regulate NEFL expression and aggregation and play a role in apoptosis. This chain is Rho guanine nucleotide exchange factor 28 (Arhgef28), found in Mus musculus (Mouse).